Consider the following 140-residue polypeptide: Large ribosomal subunit protein bL17 (140 aa).

The protein belongs to the bacterial ribosomal protein bL17 family. As to quaternary structure, part of the 50S ribosomal subunit. Contacts protein L32.

In Rhizobium etli (strain CIAT 652), this protein is Large ribosomal subunit protein bL17.